The primary structure comprises 366 residues: MIEKMILRRFFSTKSSTMRAWVSENGSGVELKEVPLPVINKPGQVLLKVKAASVNPIDVDMSQGYGREFLGTWKKIESCDAAASRFPLIPGRDCTAVVESVGGDVHNLAPGDEVMAVVPVILPGTHAEFVVTDSKYCSKKPSNLSFVSAAALPYVASTAYSAFTIARVSQRNAKQQRVLIHGGAGGVGSMAIQLLKAWGCEKIVATCAKGSFDIVKQLGAIPVDYTSDQATQELIEHAPFEVILDTVDSQLAKWSDNVMGVWRNCVHVSIVSPLMREMDKNGVPLGLVTTAMKHFERSFQSHLRGRWFSYAFFRPSSDLMSQLSRFAEDGKIVPVVEQVMGFEELEKAYEKVSQLNGRGKTVIKYD.

The transit peptide at M1–A20 directs the protein to the mitochondrion.

The protein belongs to the zinc-containing alcohol dehydrogenase family. Quinone oxidoreductase subfamily. As to expression, expressed in pharynx, muscles and intestine.

It is found in the mitochondrion. Its function is as follows. Plays a role in oxygen metabolism in the mitochondria by regulating the levels of reactive oxygen species (ROS) thereby conferring resistance to oxidative stress. Involved in resistance to P.aeruginosa PA14 infection. Regulates lifespan. This is Reticulon-4-interacting protein 1, mitochondrial from Caenorhabditis elegans.